A 40-amino-acid polypeptide reads, in one-letter code: MITDVQLAIFSNVLGVFLFLLVVAYHYINANTGKSIIKSK.

The Lumenal portion of the chain corresponds to 1–4 (MITD). Residues 5–25 (VQLAIFSNVLGVFLFLLVVAY) traverse the membrane as a helical segment. Over 26-40 (HYINANTGKSIIKSK) the chain is Cytoplasmic.

It belongs to the OST4 family. In terms of assembly, component of the oligosaccharyltransferase (OST) complex.

The protein localises to the endoplasmic reticulum membrane. Its function is as follows. Subunit of the oligosaccharyl transferase (OST) complex that catalyzes the initial transfer of a defined glycan (Glc(3)Man(9)GlcNAc(2) in eukaryotes) from the lipid carrier dolichol-pyrophosphate to an asparagine residue within an Asn-X-Ser/Thr consensus motif in nascent polypeptide chains, the first step in protein N-glycosylation. N-glycosylation occurs cotranslationally and the complex associates with the Sec61 complex at the channel-forming translocon complex that mediates protein translocation across the endoplasmic reticulum (ER). All subunits are required for a maximal enzyme activity. This chain is Dolichyl-diphosphooligosaccharide--protein glycosyltransferase subunit 4, found in Drosophila grimshawi (Hawaiian fruit fly).